Reading from the N-terminus, the 100-residue chain is UPF0213 protein FN1575 (100 aa).

Residues 1–77 (MAYYLYMLRC…KYIKKKKENI (77 aa)) form the GIY-YIG domain.

The protein belongs to the UPF0213 family.

The polypeptide is UPF0213 protein FN1575 (Fusobacterium nucleatum subsp. nucleatum (strain ATCC 25586 / DSM 15643 / BCRC 10681 / CIP 101130 / JCM 8532 / KCTC 2640 / LMG 13131 / VPI 4355)).